Consider the following 417-residue polypeptide: Carbohydrate sulfotransferase 8 (417 aa).

Residues Met1–Leu10 lie on the Cytoplasmic side of the membrane. The helical; Signal-anchor for type II membrane protein transmembrane segment at Ala11–Leu31 threads the bilayer. The Lumenal segment spans residues Gln32–Tyr417. The interval Phe47 to Arg101 is disordered. The segment covering His56–Arg69 has biased composition (basic and acidic residues). Residues Asn121 and Asn122 are each glycosylated (N-linked (GlcNAc...) asparagine). 3'-phosphoadenylyl sulfate-binding positions include Pro191–Asn197 and Arg251–Ser259. N-linked (GlcNAc...) asparagine glycans are attached at residues Asn287, Asn360, and Asn408.

This sequence belongs to the sulfotransferase 2 family. As to expression, strongly expressed in brain. Weakly expressed in lung and kidney. Weakly expressed in pituitary.

The protein localises to the golgi apparatus membrane. Functionally, catalyzes the transfer of sulfate to position 4 of non-reducing N-acetylgalactosamine (GalNAc) residues in both N-glycans and O-glycans. Required for biosynthesis of glycoprotein hormones lutropin and thyrotropin, by mediating sulfation of their carbohydrate structures. Only active against terminal GalNAcbeta1,GalNAcbeta. Not active toward chondroitin. This is Carbohydrate sulfotransferase 8 (Chst8) from Mus musculus (Mouse).